A 521-amino-acid chain; its full sequence is Glycogen synthase (521 aa).

Lysine 18 is an ADP-alpha-D-glucose binding site.

It belongs to the glycosyltransferase 1 family. Bacterial/plant glycogen synthase subfamily.

The enzyme catalyses [(1-&gt;4)-alpha-D-glucosyl](n) + ADP-alpha-D-glucose = [(1-&gt;4)-alpha-D-glucosyl](n+1) + ADP + H(+). It functions in the pathway glycan biosynthesis; glycogen biosynthesis. Its function is as follows. Synthesizes alpha-1,4-glucan chains using ADP-glucose. This Bordetella petrii (strain ATCC BAA-461 / DSM 12804 / CCUG 43448) protein is Glycogen synthase.